A 613-amino-acid chain; its full sequence is Leucine-rich repeat receptor-like protein FASCIATED EAR2 (613 aa).

The N-terminal stretch at 1–28 (MLTATPLPHQLLATFLLVLASATQPAVP) is a signal peptide. Residues 29–573 (ASTDRAALLA…WLGGWHGENG (545 aa)) lie on the Extracellular side of the membrane. 17 LRR repeats span residues 79-103 (TPSVAELSLRGLNLTGVIPAAPLAL), 104-128 (LRRLRTLDLSANALSGELPCSLPRS), 130-150 (LALDLSRNALSGAVPTCLPSS), 151-176 (LPALRTLNLSANFLRLPLSPRLSFPA), 178-199 (LAALDLSRNAISGAVPPRIVAD), 202-226 (NSALLLLDLSHNRFSGEIPAGIAAV), 227-250 (RSLQGLFLADNQLSGDIPPGIGNL), 251-274 (TYLQVLDLSNNRLSGSVPAGLAGC), 276-297 (QLLYLQLGGNQLSGALRPELDA), 298-322 (LASLKVLDLSNNKISGEIPLPLAGC), 324-346 (SLEVVDLSGNEISGELSSAVAKW), 347-370 (LSLKFLSLAGNQLSGHLPDWMFSF), 372-394 (LLQWLDLSSNKFVGFIPDGGFNV), 435-459 (VQATTGIDLSGNELCGEIPEGLVDM), 460-483 (KGLEYLNLSCNYLAGQIPAGLGGM), 484-507 (GRLHTLDFSHNGLSGEVPPGIAAM), and 508-531 (TVLEVLNLSYNSLSGPLPTTKFPG). N-linked (GlcNAc...) asparagine glycosylation is present at Asn-91. Asn-158 carries an N-linked (GlcNAc...) asparagine glycan. An N-linked (GlcNAc...) asparagine glycan is attached at Asn-249. N-linked (GlcNAc...) asparagine glycosylation is present at Asn-393. Residue Asn-466 is glycosylated (N-linked (GlcNAc...) asparagine). A glycan (N-linked (GlcNAc...) asparagine) is linked at Asn-514. A helical transmembrane segment spans residues 574–597 (WVSLGAFCISTMTSFYVSLATLLC). At 598 to 613 (SSNARNFVFRPVRVEY) the chain is on the cytoplasmic side.

Expressed in ear primordia, vegetative apex and young leaf tissues. Barely detected in expanded leaf tissues and not expressed in roots.

The protein localises to the cell membrane. Receptor-like protein that regulates shoot meristem proliferation. Based on additive and synergistic phenotypes of double mutants, it is probable that unlike CLV1 and CLV2 in A.thaliana, FAE2 and TD1 do not function exclusively in a single pathway. This chain is Leucine-rich repeat receptor-like protein FASCIATED EAR2 (FEA2), found in Zea mays (Maize).